The sequence spans 268 residues: Taurine import ATP-binding protein TauB (268 aa).

The 233-residue stretch at 4–236 folds into the ABC transporter domain; that stretch reads LSINNLSMRF…LGVDSDLREV (233 aa). 41–48 contributes to the ATP binding site; that stretch reads GPSGCGKT.

The protein belongs to the ABC transporter superfamily. Taurine importer (TC 3.A.1.17.1) family. As to quaternary structure, the complex is composed of two ATP-binding proteins (TauB), two transmembrane proteins (TauC) and a solute-binding protein (TauA).

Its subcellular location is the cell inner membrane. It catalyses the reaction taurine(out) + ATP + H2O = taurine(in) + ADP + phosphate + H(+). Its function is as follows. Part of the ABC transporter complex TauABC involved in taurine import. Responsible for energy coupling to the transport system. This is Taurine import ATP-binding protein TauB from Roseobacter denitrificans (strain ATCC 33942 / OCh 114) (Erythrobacter sp. (strain OCh 114)).